A 632-amino-acid chain; its full sequence is MNAPVNKQMVVDAAAIQPLPNSRKIYVEGSRPDIQVPMREIRQADTPTQFGGEKNPPIFVYDTSGPYSDPAARIDIQSGLAPLRAAWIAQRGDCEQLPGLSSEYGRAREADPKLAELRFNLQRKPRRAKAGRNVTQMHYARRGIVTPEMEFVAIRENLNRRAYVESLQAAGNRRLLDLMTRQHQGQSFGAHLPEEITPEFVREEIAAGRAIIPANINHPESEPMIIGRNFLVKINGNIGNSAVTSSISEEVDKMTWGIRWGADTIMDLSTGKNIHETREWILRNSPVPIGTVPIYQALEKVNGKAEDLSWEIFRDTLIEQAEQGVDYFTIHAGVRLAYVPMTANRMTGIVSRGGSIMAKWCLAHHRENFLYTHFEDICEIMKAYDVAFSLGDGLRPGSAWDANDEAQLSELKTLGELTEIAWKHDVQVMIEGPGHVPMQLIKENMDKELEWCREAPFYTLGPLTTDIAPGYDHITSAIGAAQIGWYGTAMLCYVTQKEHLGLPNKHDVKEGIITYKLAAHAADLAKGHPGAQIRDNALSKARFEFRWEDQFNLGLDPDKARDFHDETLPKDSAKVAHFCSMCGPHFCSMKITQDVREYAASQGVGEQDALRLGMREKAIEFVKGGGKLYDKV.

Residues asparagine 237, methionine 266, tyrosine 295, histidine 331, 351–353, 392–395, and glutamate 431 each bind substrate; these read SRG and DGLR. Histidine 435 contributes to the Zn(2+) binding site. Tyrosine 458 contacts substrate. Histidine 499 serves as a coordination point for Zn(2+). The [4Fe-4S] cluster site is built by cysteine 579, cysteine 582, and cysteine 587.

The protein belongs to the ThiC family. In terms of assembly, homodimer. Requires [4Fe-4S] cluster as cofactor.

The catalysed reaction is 5-amino-1-(5-phospho-beta-D-ribosyl)imidazole + S-adenosyl-L-methionine = 4-amino-2-methyl-5-(phosphooxymethyl)pyrimidine + CO + 5'-deoxyadenosine + formate + L-methionine + 3 H(+). The protein operates within cofactor biosynthesis; thiamine diphosphate biosynthesis. Its function is as follows. Catalyzes the synthesis of the hydroxymethylpyrimidine phosphate (HMP-P) moiety of thiamine from aminoimidazole ribotide (AIR) in a radical S-adenosyl-L-methionine (SAM)-dependent reaction. The polypeptide is Phosphomethylpyrimidine synthase (Chromobacterium violaceum (strain ATCC 12472 / DSM 30191 / JCM 1249 / CCUG 213 / NBRC 12614 / NCIMB 9131 / NCTC 9757 / MK)).